A 123-amino-acid polypeptide reads, in one-letter code: MPTINQLIANPREVQKSRKKVPALQQSPQKRGVCTRVYTTTPKKPNSALRKVAKVRLTNGFEVIGYIPGEGHNLQEHSVVMIRGGRVKDLPGVRYHILRGVLDTQGVKNRKQRRSKYGAKRPK.

A disordered region spans residues 9–32; the sequence is ANPREVQKSRKKVPALQQSPQKRG. At Asp89 the chain carries 3-methylthioaspartic acid.

The protein belongs to the universal ribosomal protein uS12 family. As to quaternary structure, part of the 30S ribosomal subunit. Contacts proteins S8 and S17. May interact with IF1 in the 30S initiation complex.

Functionally, with S4 and S5 plays an important role in translational accuracy. Interacts with and stabilizes bases of the 16S rRNA that are involved in tRNA selection in the A site and with the mRNA backbone. Located at the interface of the 30S and 50S subunits, it traverses the body of the 30S subunit contacting proteins on the other side and probably holding the rRNA structure together. The combined cluster of proteins S8, S12 and S17 appears to hold together the shoulder and platform of the 30S subunit. The protein is Small ribosomal subunit protein uS12 of Bradyrhizobium sp. (strain BTAi1 / ATCC BAA-1182).